The primary structure comprises 1692 residues: Fatty acid synthase alpha subunit hexA (1692 aa).

Positions Ala-44–Pro-80 are disordered. The Carrier domain maps to Leu-90–Leu-174. The residue at position 125 (Ser-125) is an O-(pantetheine 4'-phosphoryl)serine. The tract at residues Phe-508–Val-746 is ketoreductase (KR) domain. A Ketosynthase family 3 (KS3) domain is found at Lys-948–Ala-1430. Cys-1135 (for beta-ketoacyl synthase activity) is an active-site residue. Residues Gly-1263–Arg-1287 form a disordered region. The segment covering Ser-1270–Ser-1284 has biased composition (low complexity). Catalysis depends on for beta-ketoacyl synthase activity residues His-1315 and His-1356. A Mg(2+)-binding site is contributed by Asp-1569. Acetyl-CoA-binding positions include Asp-1569–Val-1571, Glu-1615–Thr-1625, Lys-1639–Asn-1642, and Ile-1668–His-1670. Ser-1669 is a binding site for Mg(2+).

Belongs to the thiolase-like superfamily. Fungal fatty acid synthetase subunit alpha family. As to quaternary structure, [Alpha(6)beta(6)] hexamers of two multifunctional subunits (alpha and beta). Post-translationally, 4'-phosphopantetheine is transferred from CoA to a specific serine of the acyl carrier domain by the C-terminal PPT domain. This modification is essential for activity because fatty acids are bound in thioester linkage to the sulfhydryl of the prosthetic group.

It catalyses the reaction acetyl-CoA + n malonyl-CoA + 2n NADPH + 4n H(+) = a long-chain-acyl-CoA + n CoA + n CO2 + 2n NADP(+).. It carries out the reaction a fatty acyl-[ACP] + malonyl-[ACP] + H(+) = a 3-oxoacyl-[ACP] + holo-[ACP] + CO2. The catalysed reaction is a (3R)-hydroxyacyl-[ACP] + NADP(+) = a 3-oxoacyl-[ACP] + NADPH + H(+). Its pathway is mycotoxin biosynthesis. In terms of biological role, fatty acid synthase alpha subunit; part of the fragmented gene cluster that mediates the biosynthesis of dothistromin (DOTH), a polyketide toxin very similar in structure to the aflatoxin precursor, versicolorin B. The first step of the pathway is the conversion of acetate to norsolorinic acid (NOR) and requires the fatty acid synthase subunits hexA and hexB, as well as the polyketide synthase pksA. PksA combines a hexanoyl starter unit and 7 malonyl-CoA extender units to synthesize the precursor NOR. The hexanoyl starter unit is provided to the acyl-carrier protein (ACP) domain by the fungal fatty acid synthase hexA/hexB. The second step is the conversion of NOR to averantin (AVN) and requires the norsolorinic acid ketoreductase nor1, which catalyzes the dehydration of norsolorinic acid to form (1'S)-averantin. The cytochrome P450 monooxygenase avnA then catalyzes the hydroxylation of AVN to 5'hydroxyaverantin (HAVN). The next step is performed by adhA that transforms HAVN to averufin (AVF). Averufin might then be converted to hydroxyversicolorone by cypX and avfA. Hydroxyversicolorone is further converted versiconal hemiacetal acetate (VHA) by moxY. VHA is then the substrate for the versiconal hemiacetal acetate esterase est1 to yield versiconal (VAL). Versicolorin B synthase vbsA then converts VAL to versicolorin B (VERB) by closing the bisfuran ring. Then, the activity of the versicolorin B desaturase verB leads to versicolorin A (VERA). DotB, a predicted chloroperoxidase, may perform epoxidation of the A-ring of VERA. Alternatively, a cytochrome P450, such as cypX or avnA could catalyze this step. It is also possible that another, uncharacterized, cytochrome P450 enzyme is responsible for this step. Opening of the epoxide could potentially be achieved by the epoxide hydrolase epoA. However, epoA seems not to be required for DOTH biosynthesis, but other epoxide hydrolases may have the ability to complement this hydrolysis. Alternatively, opening of the epoxide ring could be achieved non-enzymatically. The next step is the deoxygenation of ring A to yield the 5,8-dihydroxyanthraquinone which is most likely catalyzed by the NADPH dehydrogenase encoded by ver1. The last stages of DOTH biosynthesis are proposed to involve hydroxylation of the bisfuran. OrdB and norB might have oxidative roles here. An alternative possibility is that cytochrome P450 monoogenases such as avnA and cypX might perform these steps in addition to previously proposed steps. The chain is Fatty acid synthase alpha subunit hexA from Dothistroma septosporum (strain NZE10 / CBS 128990) (Red band needle blight fungus).